We begin with the raw amino-acid sequence, 122 residues long: Large ribosomal subunit protein uL14 (122 aa).

This sequence belongs to the universal ribosomal protein uL14 family. In terms of assembly, part of the 50S ribosomal subunit. Forms a cluster with proteins L3 and L19. In the 70S ribosome, L14 and L19 interact and together make contacts with the 16S rRNA in bridges B5 and B8.

Binds to 23S rRNA. Forms part of two intersubunit bridges in the 70S ribosome. The chain is Large ribosomal subunit protein uL14 from Lactobacillus helveticus (strain DPC 4571).